The primary structure comprises 382 residues: S-adenosylmethionine synthase (382 aa).

Residue His-16 participates in ATP binding. Residue Asp-18 participates in Mg(2+) binding. Residue Glu-44 coordinates K(+). L-methionine is bound by residues Glu-57 and Gln-100. Residues 100-110 form a flexible loop region; sequence QSADIAIGVDE. ATP contacts are provided by residues 165 to 167, Asp-240, 246 to 247, Ala-263, and Lys-267; these read DAK and RK. Residue Asp-240 coordinates L-methionine. Lys-271 is an L-methionine binding site.

The protein belongs to the AdoMet synthase family. In terms of assembly, homotetramer; dimer of dimers. Requires Mg(2+) as cofactor. K(+) is required as a cofactor.

Its subcellular location is the cytoplasm. It catalyses the reaction L-methionine + ATP + H2O = S-adenosyl-L-methionine + phosphate + diphosphate. The protein operates within amino-acid biosynthesis; S-adenosyl-L-methionine biosynthesis; S-adenosyl-L-methionine from L-methionine: step 1/1. Catalyzes the formation of S-adenosylmethionine (AdoMet) from methionine and ATP. The overall synthetic reaction is composed of two sequential steps, AdoMet formation and the subsequent tripolyphosphate hydrolysis which occurs prior to release of AdoMet from the enzyme. This Alcanivorax borkumensis (strain ATCC 700651 / DSM 11573 / NCIMB 13689 / SK2) protein is S-adenosylmethionine synthase.